A 751-amino-acid polypeptide reads, in one-letter code: C2 domain-containing protein At1g53590 (751 aa).

The next 2 membrane-spanning stretches (helical) occupy residues 2-22 (ESSL…ISSL) and 26-46 (HAFF…RYVM). The 195-residue stretch at 68–262 (DSESVRWMNY…QPNMLVVDME (195 aa)) folds into the SMP-LTD domain. One can recognise a C2 domain in the interval 267 to 381 (PTSENWFFVD…RGGQRNDMWL (115 aa)). Ca(2+) is bound by residues aspartate 298, aspartate 304, aspartate 352, aspartate 354, and aspartate 359. Disordered regions lie at residues 469 to 519 (QIWE…GRGL) and 572 to 751 (SGPL…SSSK). The segment covering 472-482 (EPRKGKSRRLD) has biased composition (basic and acidic residues). Positions 483–502 (SQIQRTPNDESLSNGSSSTD) are enriched in polar residues. The segment covering 590–611 (NSGKGHMKDVAKSFLKQAEKSA) has biased composition (basic and acidic residues). Residues 612–624 (KQIKHAFSRKGSM) show a composition bias toward basic residues. A compositionally biased stretch (basic and acidic residues) spans 625-634 (KPRDGHKEIV). Positions 639–651 (SGTDSESSDDDDA) are enriched in acidic residues. Composition is skewed to basic and acidic residues over residues 664-681 (KLTR…DHVD) and 703-751 (VEAK…SSSK). Residues 701 to 728 (TDVEAKEEKLKEAAESETRDMDTAMNIK) adopt a coiled-coil conformation.

This sequence belongs to the extended synaptotagmin family. Requires Ca(2+) as cofactor.

The protein localises to the membrane. The protein is C2 domain-containing protein At1g53590 (NTMC2T6.1) of Arabidopsis thaliana (Mouse-ear cress).